The following is a 425-amino-acid chain: Protein CLP1 homolog (425 aa).

Residues Glu18, Lys59, and 121–126 contribute to the ATP site; that span reads DVGKST.

The protein belongs to the Clp1 family. Clp1 subfamily.

It localises to the nucleus. Required for endonucleolytic cleavage during polyadenylation-dependent pre-mRNA 3'-end formation. This is Protein CLP1 homolog (cbc) from Drosophila grimshawi (Hawaiian fruit fly).